A 181-amino-acid chain; its full sequence is ATP-dependent protease subunit HslV (181 aa).

The active site involves threonine 6. Na(+)-binding residues include glycine 162, cysteine 165, and threonine 168.

Belongs to the peptidase T1B family. HslV subfamily. In terms of assembly, a double ring-shaped homohexamer of HslV is capped on each side by a ring-shaped HslU homohexamer. The assembly of the HslU/HslV complex is dependent on binding of ATP.

Its subcellular location is the cytoplasm. The catalysed reaction is ATP-dependent cleavage of peptide bonds with broad specificity.. Allosterically activated by HslU binding. Protease subunit of a proteasome-like degradation complex believed to be a general protein degrading machinery. The polypeptide is ATP-dependent protease subunit HslV (Nitratidesulfovibrio vulgaris (strain ATCC 29579 / DSM 644 / CCUG 34227 / NCIMB 8303 / VKM B-1760 / Hildenborough) (Desulfovibrio vulgaris)).